Reading from the N-terminus, the 393-residue chain is Sialyltransferase-like protein 1 (393 aa).

Residues 1–8 (MKRPLRRP) lie on the Cytoplasmic side of the membrane. The helical; Signal-anchor for type II membrane protein transmembrane segment at 9-27 (FAVLLFVVLCAAASFPSVL) threads the bilayer. The Lumenal segment spans residues 28 to 393 (RRSVGPAPVL…IAVPPVVFYH (366 aa)). N-linked (GlcNAc...) asparagine glycans are attached at residues N49, N212, and N258.

It belongs to the glycosyltransferase 29 family. In terms of tissue distribution, expressed in leaves and stalks. Expressed at low levels in roots.

It localises to the golgi apparatus membrane. In terms of biological role, possesses sialyltransferase-like activity in vitro. Transfers sialic acid to the oligosaccharide Gal-beta-1,3-GalNAc and to glycoproteins such as asialofetuin, alpha-1-acid glycoprotein (NeuAc-alpha-2,3-Gal-beta-1,3-GalNAc-) and andasialo-alpha-1-acid glycoprotein. The transferred sialic acid is linked to galactose of Gal-beta-1,3-GalNAc through alpha-2,6-linkage. The polypeptide is Sialyltransferase-like protein 1 (Oryza sativa subsp. japonica (Rice)).